Consider the following 152-residue polypeptide: NADH-quinone oxidoreductase subunit A 2 (152 aa).

A run of 3 helical transmembrane segments spans residues 8-28, 63-83, and 90-110; these read FGKVFLFLLFGVVFVIGGYVS, FYVVALIFIIFDVEVLFLFPW, and LGGFALFEAVIFVTILTLGLV.

This sequence belongs to the complex I subunit 3 family. In terms of assembly, NDH-1 is composed of 14 different subunits. Subunits NuoA, H, J, K, L, M, N constitute the membrane sector of the complex.

The protein localises to the cell inner membrane. The enzyme catalyses a quinone + NADH + 5 H(+)(in) = a quinol + NAD(+) + 4 H(+)(out). Functionally, NDH-1 shuttles electrons from NADH, via FMN and iron-sulfur (Fe-S) centers, to quinones in the respiratory chain. The immediate electron acceptor for the enzyme in this species is believed to be a menaquinone. Couples the redox reaction to proton translocation (for every two electrons transferred, four hydrogen ions are translocated across the cytoplasmic membrane), and thus conserves the redox energy in a proton gradient. In Chloroherpeton thalassium (strain ATCC 35110 / GB-78), this protein is NADH-quinone oxidoreductase subunit A 2.